The sequence spans 413 residues: MRLFPVRFSAASSSMASLAKMLDFYSGFNPSPLSIKQFMDFGQNACEKKSYIFLRKELPVRLANIMKEIALLPDNLLHTRSVSEVSSWYVKSFEDVLVYEKAEPTHDNLQKFVADLDLIRNRHNDVVQTMAQGVIEMKENEGGQVDAPTESSIQYFLDRLYMSRISIRMLINQHTLLFGGNPHAGGRHIGCLDPACDLSDVVRDAYENARFLCDQYYLTSPALEIQQHSSEPGDNLPIRTVYVPSHLYYMLFELFKNSMRAVVEHHGHDNNDTLPPLKVAICKGKEDICVKISDQGGGIPRSQTDQLFKYMYSTAPQPSKSDLHTVPLAGYGYGLPISRLYARYFHGDIVLLSCEGFGTDAIIYLKALSDEANELLPIFNKTSSKFYRATVPTGDWSNQVKYAKKKKTSAVNQ.

The region spanning 137-369 (MKENEGGQVD…DAIIYLKALS (233 aa)) is the Histidine kinase domain. ATP is bound by residues 253–260 (ELFKNSMR), D294, 313–314 (ST), and 330–335 (GYGYGL).

This sequence belongs to the PDK/BCKDK protein kinase family.

The protein localises to the mitochondrion matrix. It catalyses the reaction L-seryl-[pyruvate dehydrogenase E1 alpha subunit] + ATP = O-phospho-L-seryl-[pyruvate dehydrogenase E1 alpha subunit] + ADP + H(+). Its function is as follows. Inhibits the mitochondrial pyruvate dehydrogenase complex by phosphorylation of the E1 alpha subunit, thus contributing to the regulation of glucose metabolism. The protein is [Pyruvate dehydrogenase (acetyl-transferring)] kinase, mitochondrial (Pdk) of Drosophila melanogaster (Fruit fly).